The primary structure comprises 111 residues: Large ribosomal subunit protein P2w (111 aa).

Positions 63-111 are disordered; the sequence is ASVPSGGGVAVSAAPSSGGGGAAAPAEKKEAKKEEKEESDDDMGFSLFE. The segment covering 88–98 has biased composition (basic and acidic residues); the sequence is AEKKEAKKEEK. S101 is subject to Phosphoserine.

The protein belongs to the eukaryotic ribosomal protein P1/P2 family. As to quaternary structure, P1 and P2 exist as dimers at the large ribosomal subunit.

Plays an important role in the elongation step of protein synthesis. The protein is Large ribosomal subunit protein P2w (RPP2D) of Arabidopsis thaliana (Mouse-ear cress).